Here is an 859-residue protein sequence, read N- to C-terminus: MEPLSHRGLPRLSWIDTLYSNFSYGADDYDAEGNEEQKGPPEGSETMPYIDESPTMSPQLSARSQGGGDSISPTPPEGLAPGVEAGKGLEMRKLVLSGFLASEEIYINQLEALLLPMKPLKATATTSQPVLTIQQIETIFYKIQDIYEIHKEFYDNLCPKVQQWDSQVTMGHLFQKLASQLGVYKAFVDNYKVALETAEKCSQSNNQFQKISEELKVKGPKDSRDSHTSVTMEALLYKPIDRVTRSTLVLHDLLKHTPVDHPDYPLLQDALRISQNFLSSINEDIDPRRTAVTTPKGETRQLVKDGFLVEVSEGSRKLRHVFLFTDVLLCAKLKKTSAGKHQQYDCKWYIPLADLVFPSPEESEASPQVHPFPDHELEDMKMKISALKSEIQKEKANKGQSRAIERLKKKMFENEFLLLLNSPTIPFRIHNRNGKSYLFLLSSDYERSEWREAIQKLQKKDLQAFVLSSVELQVLTGSCFKLRTVHNIPVTSNKDDDESPGLYGFLHVIVHSAKGFKQSANLYCTLEVDSFGYFVSKAKTRVFRDTTEPKWDEEFEIELEGSQSLRILCYEKCYDKTKVNKDNNEIVDKIMGKGQIQLDPQTVETKNWHTDVIEMNGIKVEFSMKFTSRDMSLKRTPSKKQSGVFGVKISVVTKRERSKVPYIVRQCVEEVEKRGIEEVGIYRISGVATDIQALKAVFDANNKDILLMLSDMDINAIAGTLKLYFRELPEPLLTDRLYPAFMEGIALSDPAAKENCMMHLLRSLPDPNLITFLFLLEHLKRVAEKEPVNKMSLHNLATVFGPTLLRPSEVESKAHLTSAADIWSHDVMAQVQVLLYYLQHPPISFAELKRNTLYFSTDV.

Residues 27–84 (DDYDAEGNEEQKGPPEGSETMPYIDESPTMSPQLSARSQGGGDSISPTPPEGLAPGVE) form a disordered region. Polar residues predominate over residues 54-64 (PTMSPQLSARS). Ser-57 is modified (phosphoserine). In terms of domain architecture, DH spans 91-284 (MRKLVLSGFL…QNFLSSINED (194 aa)). One can recognise a PH domain in the interval 301–459 (QLVKDGFLVE…WREAIQKLQK (159 aa)). The 130-residue stretch at 484-613 (TVHNIPVTSN…ETKNWHTDVI (130 aa)) folds into the C2 domain. Positions 647-845 (VKISVVTKRE…YYLQHPPISF (199 aa)) constitute a Rho-GAP domain.

In terms of assembly, interacts with DLG4.

It is found in the cell projection. It localises to the dendritic spine. The protein localises to the axon. The protein resides in the synapse. Protein with a unique structure having two opposing regulatory activities toward small GTP-binding proteins. The C-terminus is a GTPase-activating protein domain which stimulates GTP hydrolysis by RAC1, RAC2 and CDC42. Accelerates the intrinsic rate of GTP hydrolysis of RAC1 or CDC42, leading to down-regulation of the active GTP-bound form. The central Dbl homology (DH) domain functions as guanine nucleotide exchange factor (GEF) that modulates the GTPases CDC42, RHOA and RAC1. Promotes the conversion of CDC42, RHOA and RAC1 from the GDP-bound to the GTP-bound form. Functions as an important negative regulator of neuronal RAC1 activity. Regulates macrophage functions such as CSF1-directed motility and phagocytosis through the modulation of RAC1 activity. The polypeptide is Active breakpoint cluster region-related protein (ABR) (Bos taurus (Bovine)).